Reading from the N-terminus, the 327-residue chain is Cobalamin biosynthesis protein CobD (327 aa).

The next 4 helical transmembrane spans lie at 63 to 83 (VGILVLLAGATALGVVLARLF), 84 to 104 (DVLGALGSLLEVVTVAVFLAQ), 158 to 178 (FSDGVVAPAFWYAVAGLPGLL), and 305 to 325 (VFYAACSVMTFAFAAAALPLL).

Belongs to the CobD/CbiB family.

The protein resides in the cell membrane. Its pathway is cofactor biosynthesis; adenosylcobalamin biosynthesis. Converts cobyric acid to cobinamide by the addition of aminopropanol on the F carboxylic group. In Rhizobium meliloti (strain 1021) (Ensifer meliloti), this protein is Cobalamin biosynthesis protein CobD.